A 101-amino-acid polypeptide reads, in one-letter code: Urease subunit beta (101 aa).

The protein belongs to the urease beta subunit family. In terms of assembly, heterotrimer of UreA (gamma), UreB (beta) and UreC (alpha) subunits. Three heterotrimers associate to form the active enzyme.

Its subcellular location is the cytoplasm. The catalysed reaction is urea + 2 H2O + H(+) = hydrogencarbonate + 2 NH4(+). The protein operates within nitrogen metabolism; urea degradation; CO(2) and NH(3) from urea (urease route): step 1/1. The sequence is that of Urease subunit beta from Jannaschia sp. (strain CCS1).